The following is a 159-amino-acid chain: Ribosomal RNA large subunit methyltransferase H (159 aa).

S-adenosyl-L-methionine is bound by residues leucine 76, glycine 108, and 127–132 (FSKMTF).

Belongs to the RNA methyltransferase RlmH family. In terms of assembly, homodimer.

It localises to the cytoplasm. The enzyme catalyses pseudouridine(1915) in 23S rRNA + S-adenosyl-L-methionine = N(3)-methylpseudouridine(1915) in 23S rRNA + S-adenosyl-L-homocysteine + H(+). Functionally, specifically methylates the pseudouridine at position 1915 (m3Psi1915) in 23S rRNA. The protein is Ribosomal RNA large subunit methyltransferase H of Bifidobacterium longum (strain DJO10A).